We begin with the raw amino-acid sequence, 213 residues long: Na(+)-translocating NADH-quinone reductase subunit D (213 aa).

6 helical membrane-spanning segments follow: residues 22 to 42, 43 to 63, 77 to 97, 101 to 121, 131 to 151, and 183 to 203; these read LIAI…TTAL, TMGF…SLLR, IIIS…FFTI, LSVF…AESM, FLDG…ISII, and LGLM…IWIV.

It belongs to the NqrDE/RnfAE family. In terms of assembly, composed of six subunits; NqrA, NqrB, NqrC, NqrD, NqrE and NqrF.

It localises to the cell inner membrane. It catalyses the reaction a ubiquinone + n Na(+)(in) + NADH + H(+) = a ubiquinol + n Na(+)(out) + NAD(+). In terms of biological role, NQR complex catalyzes the reduction of ubiquinone-1 to ubiquinol by two successive reactions, coupled with the transport of Na(+) ions from the cytoplasm to the periplasm. NqrA to NqrE are probably involved in the second step, the conversion of ubisemiquinone to ubiquinol. The chain is Na(+)-translocating NADH-quinone reductase subunit D from Chlamydia trachomatis serovar A (strain ATCC VR-571B / DSM 19440 / HAR-13).